A 720-amino-acid polypeptide reads, in one-letter code: Polyribonucleotide nucleotidyltransferase (720 aa).

2 residues coordinate Mg(2+): aspartate 487 and aspartate 493. Residues 554-613 enclose the KH domain; the sequence is PRIETFKIPTDKIREVIGTGGKVIREIVEKTGAKVNIEDDGTVKVASSDGEAMKAAIKWI. Residues 623 to 691 enclose the S1 motif domain; the sequence is GQIYDGTVVK…DRGKTRLSMK (69 aa). The disordered stretch occupies residues 692–720; the sequence is AVDQTTGEDLEAKQKAEGGAEAPREAAGE. Basic and acidic residues predominate over residues 701–720; sequence LEAKQKAEGGAEAPREAAGE.

This sequence belongs to the polyribonucleotide nucleotidyltransferase family. The cofactor is Mg(2+).

Its subcellular location is the cytoplasm. It carries out the reaction RNA(n+1) + phosphate = RNA(n) + a ribonucleoside 5'-diphosphate. Involved in mRNA degradation. Catalyzes the phosphorolysis of single-stranded polyribonucleotides processively in the 3'- to 5'-direction. This chain is Polyribonucleotide nucleotidyltransferase, found in Bradyrhizobium sp. (strain BTAi1 / ATCC BAA-1182).